Consider the following 593-residue polypeptide: Aspartate--tRNA ligase (593 aa).

Glu-180 provides a ligand contact to L-aspartate. Residues 204 to 207 are aspartate; that stretch reads QIFK. L-aspartate is bound at residue Arg-226. Residues 226 to 228 and Gln-235 each bind ATP; that span reads RDE. His-453 serves as a coordination point for L-aspartate. ATP is bound at residue Glu-487. L-aspartate is bound at residue Arg-494. Position 539–542 (539–542) interacts with ATP; that stretch reads GLDR.

This sequence belongs to the class-II aminoacyl-tRNA synthetase family. Type 1 subfamily. Homodimer.

It localises to the cytoplasm. The catalysed reaction is tRNA(Asp) + L-aspartate + ATP = L-aspartyl-tRNA(Asp) + AMP + diphosphate. In terms of biological role, catalyzes the attachment of L-aspartate to tRNA(Asp) in a two-step reaction: L-aspartate is first activated by ATP to form Asp-AMP and then transferred to the acceptor end of tRNA(Asp). The chain is Aspartate--tRNA ligase from Clostridium botulinum (strain 657 / Type Ba4).